The primary structure comprises 347 residues: Protein phosphatase 2C homolog 1 (347 aa).

Positions 1 to 41 are disordered; the sequence is MKGSHPNAGSLLEPLHKLNPFSENSTSGHRKNASDHSADGE. Over residues 32–41 the composition is skewed to basic and acidic residues; that stretch reads NASDHSADGE. One can recognise a PPM-type phosphatase domain in the interval 71 to 323; the sequence is LAGLMEDKNQ…DNITCIVVNL (253 aa). 4 residues coordinate Mn(2+): aspartate 109, glycine 110, aspartate 275, and aspartate 314.

Belongs to the PP2C family. Monomer. The cofactor is Mg(2+). It depends on Mn(2+) as a cofactor.

It catalyses the reaction O-phospho-L-seryl-[protein] + H2O = L-seryl-[protein] + phosphate. It carries out the reaction O-phospho-L-threonyl-[protein] + H2O = L-threonyl-[protein] + phosphate. Its function is as follows. Serine and threonine phosphatase. Has a specialized role in the heat shock response. May be responsible for the dephosphorylation of hsp90. This is Protein phosphatase 2C homolog 1 (ptc1) from Schizosaccharomyces pombe (strain 972 / ATCC 24843) (Fission yeast).